Reading from the N-terminus, the 301-residue chain is Inactive C-alpha-formylglycine-generating enzyme 2 (301 aa).

The first 25 residues, 1-25 (MGISLSPLLTVLSLLSGRWLELGNG), serve as a signal peptide directing secretion. Cysteine 156 and cysteine 290 form a disulfide bridge. A glycan (N-linked (GlcNAc...) asparagine) is linked at asparagine 191. Ca(2+)-binding residues include asparagine 194, leucine 195, aspartate 208, phenylalanine 210, aspartate 229, glycine 232, valine 234, and glutamate 236. A compositionally biased stretch (polar residues) spans 274-284 (RMGNTPDSASD). The disordered stretch occupies residues 274–301 (RMGNTPDSASDNLGFRCASGAGRPPGEL). The Non-canonical ER retention motif motif lies at 298 to 301 (PGEL).

This sequence belongs to the sulfatase-modifying factor family. As to quaternary structure, homodimer and heterodimer with SUMF1.

It localises to the endoplasmic reticulum lumen. Functionally, lacks formylglycine generating activity and is unable to convert newly synthesized inactive sulfatases to their active form. Inhibits the activation of sulfatases by SUMF1. The sequence is that of Inactive C-alpha-formylglycine-generating enzyme 2 from Bos taurus (Bovine).